The sequence spans 346 residues: Putative glycosyltransferase HI_0523 (346 aa).

This sequence belongs to the glycosyltransferase 9 family.

The sequence is that of Putative glycosyltransferase HI_0523 from Haemophilus influenzae (strain ATCC 51907 / DSM 11121 / KW20 / Rd).